The primary structure comprises 357 residues: Cinnamyl alcohol dehydrogenase 1 (357 aa).

Cys-47 contributes to the Zn(2+) binding site. Thr-49 provides a ligand contact to NADP(+). Zn(2+)-binding residues include His-69, Glu-70, Cys-100, Cys-103, Cys-106, Cys-114, and Cys-163. Residues Thr-167, 188–193 (GLGGVG), 211–216 (SSSDKK), Thr-251, Gly-275, and 298–300 (SFI) each bind NADP(+).

This sequence belongs to the zinc-containing alcohol dehydrogenase family. In terms of assembly, homodimer. Requires Zn(2+) as cofactor. In terms of tissue distribution, expressed in leaves, mainly in peltate glands.

It carries out the reaction (E)-cinnamyl alcohol + NADP(+) = (E)-cinnamaldehyde + NADPH + H(+). It catalyses the reaction (E)-coniferol + NADP(+) = (E)-coniferaldehyde + NADPH + H(+). The catalysed reaction is (E)-sinapyl alcohol + NADP(+) = (E)-sinapaldehyde + NADPH + H(+). The enzyme catalyses (E)-4-coumaroyl alcohol + NADP(+) = (E)-4-coumaraldehyde + NADPH + H(+). It carries out the reaction (E)-caffeyl alcohol + NADP(+) = (E)-caffeyl aldehyde + NADPH + H(+). It participates in aromatic compound metabolism; phenylpropanoid biosynthesis. 60% inhibition by 5 mM Ca(+), Mg(+) or Cu(+). In terms of biological role, involved in the production of citral, a mixture of geranial and neral with a strong lemony scent. Reversibly oxidizes geraniol to produce geranial at half the efficiency compared with its activity with cinnamyl alcohol. Does not use nerol and neral as substrates. This chain is Cinnamyl alcohol dehydrogenase 1 (CAD1), found in Ocimum basilicum (Sweet basil).